The sequence spans 101 residues: Integration host factor subunit alpha (101 aa).

The protein belongs to the bacterial histone-like protein family. In terms of assembly, heterodimer of an alpha and a beta chain.

Its function is as follows. This protein is one of the two subunits of integration host factor, a specific DNA-binding protein that functions in genetic recombination as well as in transcriptional and translational control. The sequence is that of Integration host factor subunit alpha from Halorhodospira halophila (strain DSM 244 / SL1) (Ectothiorhodospira halophila (strain DSM 244 / SL1)).